The sequence spans 226 residues: Putative N-acetylmannosamine-6-phosphate 2-epimerase (226 aa).

This sequence belongs to the NanE family.

It catalyses the reaction an N-acyl-D-glucosamine 6-phosphate = an N-acyl-D-mannosamine 6-phosphate. Its pathway is amino-sugar metabolism; N-acetylneuraminate degradation; D-fructose 6-phosphate from N-acetylneuraminate: step 3/5. Its function is as follows. Converts N-acetylmannosamine-6-phosphate (ManNAc-6-P) to N-acetylglucosamine-6-phosphate (GlcNAc-6-P). The protein is Putative N-acetylmannosamine-6-phosphate 2-epimerase of Mycoplasma mycoides subsp. mycoides SC (strain CCUG 32753 / NCTC 10114 / PG1).